Reading from the N-terminus, the 309-residue chain is Serine/threonine-protein phosphatase 2A catalytic subunit beta isoform (309 aa).

4 residues coordinate Mn(2+): aspartate 57, histidine 59, aspartate 85, and asparagine 117. The active-site Proton donor is histidine 118. Mn(2+)-binding residues include histidine 167 and histidine 241. Tyrosine 307 is modified (phosphotyrosine). A Leucine methyl ester modification is found at leucine 309.

The protein belongs to the PPP phosphatase family. PP-1 subfamily. As to quaternary structure, PP2A consists of a common heterodimeric core enzyme (composed of a 36 kDa catalytic subunit (subunit C) and a 65 kDa constant regulatory subunit (PR65) (subunit A)) that associates with a variety of regulatory subunits. Proteins that associate with the core dimer include three families of regulatory subunits B (the R2/B/PR55/B55, R3/B''/PR72/PR130/PR59 and R5/B'/B56 families), the 48 kDa variable regulatory subunit, viral proteins, and cell signaling molecules. Binds PPME1. May indirectly interact with SGO1, most probably through regulatory B56 subunits. Interacts with CTTNBP2NL. Interacts with PTPA. Found in a complex with at least ARL2, PPP2CB, PPP2R1A, PPP2R2A, PPP2R5E and TBCD. Interacts with TBCD. Part of the core of STRIPAK complexes composed of PP2A catalytic and scaffolding subunits, the striatins (PP2A regulatory subunits), the striatin-associated proteins MOB4, STRIP1 and STRIP2, PDCD10 and members of the STE20 kinases, such as STK24 and STK26. Mn(2+) serves as cofactor. Reversibly methyl esterified on Leu-309 by leucine carboxyl methyltransferase 1 (Lcmt1) and protein phosphatase methylesterase 1 (Ppme1). Carboxyl methylation influences the affinity of the catalytic subunit for the different regulatory subunits, thereby modulating the PP2A holoenzyme's substrate specificity, enzyme activity and cellular localization. Post-translationally, phosphorylation of either threonine (by autophosphorylation-activated protein kinase) or tyrosine results in inactivation of the phosphatase. Auto-dephosphorylation has been suggested as a mechanism for reactivation. In terms of processing, may be monoubiquitinated by NOSIP.

The protein resides in the cytoplasm. Its subcellular location is the nucleus. It is found in the chromosome. The protein localises to the centromere. It localises to the cytoskeleton. The protein resides in the spindle pole. It catalyses the reaction O-phospho-L-seryl-[protein] + H2O = L-seryl-[protein] + phosphate. The catalysed reaction is O-phospho-L-threonyl-[protein] + H2O = L-threonyl-[protein] + phosphate. Catalytic subunit of protein phosphatase 2A (PP2A), a serine/threonine phosphatase involved in the regulation of a wide variety of enzymes, signal transduction pathways, and cellular events. PP2A can modulate the activity of phosphorylase B kinase, casein kinase 2, mitogen-stimulated S6 kinase, and MAP-2 kinase. Part of the striatin-interacting phosphatase and kinase (STRIPAK) complexes. STRIPAK complexes have critical roles in protein (de)phosphorylation and are regulators of multiple signaling pathways including Hippo, MAPK, nuclear receptor and cytoskeleton remodeling. Different types of STRIPAK complexes are involved in a variety of biological processes such as cell growth, differentiation, apoptosis, metabolism and immune regulation. The sequence is that of Serine/threonine-protein phosphatase 2A catalytic subunit beta isoform (Ppp2cb) from Mus musculus (Mouse).